Here is a 180-residue protein sequence, read N- to C-terminus: Ribosome-recycling factor (180 aa).

Belongs to the RRF family.

The protein localises to the cytoplasm. In terms of biological role, responsible for the release of ribosomes from messenger RNA at the termination of protein biosynthesis. May increase the efficiency of translation by recycling ribosomes from one round of translation to another. The protein is Ribosome-recycling factor of Chlamydia caviae (strain ATCC VR-813 / DSM 19441 / 03DC25 / GPIC) (Chlamydophila caviae).